Here is a 481-residue protein sequence, read N- to C-terminus: Beta-amyrin 28-monooxygenase (481 aa).

The chain crosses the membrane as a helical span at residues 4–24 (FYVPLLSLFVLFVSLSFYFLF). Position 428 (Cys-428) interacts with heme.

This sequence belongs to the cytochrome P450 family. The cofactor is heme.

It is found in the membrane. The catalysed reaction is beta-amyrin + 3 reduced [NADPH--hemoprotein reductase] + 3 O2 = oleanolate + 3 oxidized [NADPH--hemoprotein reductase] + 4 H2O + 4 H(+). Its function is as follows. Catalyzes the oxidation of the methyl group to a carboxyl group at the C-28 position of beta-amyrin to form oleanolate. The protein is Beta-amyrin 28-monooxygenase of Kalopanax septemlobus (Castor aralia).